The following is a 387-amino-acid chain: Phosphoglycerate kinase (387 aa).

Substrate-binding positions include 21 to 23 (DLN), arginine 36, 59 to 62 (HLGR), arginine 113, and arginine 146. ATP-binding positions include lysine 197, glutamate 314, and 340 to 343 (GGDT).

This sequence belongs to the phosphoglycerate kinase family. As to quaternary structure, monomer.

The protein resides in the cytoplasm. It catalyses the reaction (2R)-3-phosphoglycerate + ATP = (2R)-3-phospho-glyceroyl phosphate + ADP. It functions in the pathway carbohydrate degradation; glycolysis; pyruvate from D-glyceraldehyde 3-phosphate: step 2/5. In Pseudomonas fluorescens (strain SBW25), this protein is Phosphoglycerate kinase.